A 153-amino-acid chain; its full sequence is Insulin-like growth factor 1 (153 aa).

A b region spans residues 49–77 (GPETLCGAELVDALQFVCGDRGFYFNKPT). Cystine bridges form between cysteine 54/cysteine 96, cysteine 66/cysteine 109, and cysteine 95/cysteine 100. The tract at residues 78-89 (GYGSSSRRAPQT) is c. An a region spans residues 90–110 (GIVDECCFRSCDLRRLEMYCA). The segment at 111–118 (PLKPAKSA) is d. Residues 119–153 (RSVRAQRHTDMPKAQKEVHLKNASRGSAGNKNYRM) constitute a propeptide, e peptide. The segment at 120 to 153 (SVRAQRHTDMPKAQKEVHLKNASRGSAGNKNYRM) is disordered. A compositionally biased stretch (basic and acidic residues) spans 125–138 (RHTDMPKAQKEVHL). Positions 142 to 153 (SRGSAGNKNYRM) are enriched in polar residues.

The protein belongs to the insulin family. In terms of assembly, forms a ternary complex with IGFR1 and ITGAV:ITGB3. Forms a ternary complex with IGFR1 and ITGA6:ITGB4. Forms a ternary complex with IGFBP3 and ALS.

The protein localises to the secreted. Its function is as follows. The insulin-like growth factors, isolated from plasma, are structurally and functionally related to insulin but have a much higher growth-promoting activity. May be a physiological regulator of [1-14C]-2-deoxy-D-glucose (2DG) transport and glycogen synthesis in osteoblasts. Stimulates glucose transport in bone-derived osteoblastic (PyMS) cells and is effective at much lower concentrations than insulin, not only regarding glycogen and DNA synthesis but also with regard to enhancing glucose uptake. May play a role in synapse maturation. Ca(2+)-dependent exocytosis of IGF1 is required for sensory perception of smell in the olfactory bulb. Acts as a ligand for IGF1R. Binds to the alpha subunit of IGF1R, leading to the activation of the intrinsic tyrosine kinase activity which autophosphorylates tyrosine residues in the beta subunit thus initiating a cascade of down-stream signaling events leading to activation of the PI3K-AKT/PKB and the Ras-MAPK pathways. Binds to integrins ITGAV:ITGB3 and ITGA6:ITGB4. Its binding to integrins and subsequent ternary complex formation with integrins and IGFR1 are essential for IGF1 signaling. Induces the phosphorylation and activation of IGFR1, MAPK3/ERK1, MAPK1/ERK2 and AKT1. As part of the MAPK/ERK signaling pathway, acts as a negative regulator of apoptosis in cardiomyocytes via promotion of STUB1/CHIP-mediated ubiquitination and degradation of ICER-type isoforms of CREM. The polypeptide is Insulin-like growth factor 1 (Ailuropoda melanoleuca (Giant panda)).